The primary structure comprises 124 residues: Urease subunit beta (124 aa).

This sequence belongs to the urease beta subunit family. In terms of assembly, heterotrimer of UreA (gamma), UreB (beta) and UreC (alpha) subunits. Three heterotrimers associate to form the active enzyme.

It is found in the cytoplasm. The catalysed reaction is urea + 2 H2O + H(+) = hydrogencarbonate + 2 NH4(+). It functions in the pathway nitrogen metabolism; urea degradation; CO(2) and NH(3) from urea (urease route): step 1/1. The chain is Urease subunit beta from Ureaplasma parvum serovar 3 (strain ATCC 27815 / 27 / NCTC 11736).